The chain runs to 579 residues: Multidrug resistance-like ATP-binding protein MdlA (579 aa).

The ABC transmembrane type-1 domain maps to 18–303 (YTIAIFLLIS…FAWMFNIIER (286 aa)). 6 helical membrane passes run 20-40 (IAIFLLISISILQLYPPKLIG), 53-73 (KAPILPLILIILFISIIIYIL), 134-154 (GVLTLVDSLIMGVSVIIVMIT), 155-175 (QISWKLTIISLIPMPIMAIII), 247-267 (IIHLFISISHLLAITIGSYMI), and 281-301 (ILYLGLIIWPMLAFAWMFNII). The 235-residue stretch at 338–572 (VKINYFKYSK…LKQWYGKTYL (235 aa)) folds into the ABC transporter domain. 370–377 (GPTGSGKS) contacts ATP.

Belongs to the ABC transporter superfamily. Drug exporter-2 (TC 3.A.1.117) family.

Its subcellular location is the cell membrane. It carries out the reaction ATP + H2O + xenobioticSide 1 = ADP + phosphate + xenobioticSide 2.. This chain is Multidrug resistance-like ATP-binding protein MdlA (mdlA), found in Buchnera aphidicola subsp. Baizongia pistaciae (strain Bp).